The sequence spans 30 residues: Pyrrole-2-carboxylate oxygenase (30 aa).

As to quaternary structure, homotrimer. It depends on FAD as a cofactor.

The catalysed reaction is pyrrole-2-carboxylate + NADH + O2 + H(+) = 5-hydroxypyrrole-2-carboxylate + NAD(+) + H2O. Its function is as follows. Monooxygenase that initiates the degradation of pyrrole-2-carboxylate, which allows Arthrobacter sp. strain Py1 to grow on pyrrole-2-carboxylate as sole carbon, nitrogen, and energy source. To a lesser extent, can also use pyrrole, pyrrole-2-aldehyde, and indole-2-carboxylate as substrate. In Arthrobacter sp. (strain Py1), this protein is Pyrrole-2-carboxylate oxygenase.